A 237-amino-acid chain; its full sequence is 2-C-methyl-D-erythritol 4-phosphate cytidylyltransferase (237 aa).

It belongs to the IspD/TarI cytidylyltransferase family. IspD subfamily.

It catalyses the reaction 2-C-methyl-D-erythritol 4-phosphate + CTP + H(+) = 4-CDP-2-C-methyl-D-erythritol + diphosphate. It functions in the pathway isoprenoid biosynthesis; isopentenyl diphosphate biosynthesis via DXP pathway; isopentenyl diphosphate from 1-deoxy-D-xylulose 5-phosphate: step 2/6. In terms of biological role, catalyzes the formation of 4-diphosphocytidyl-2-C-methyl-D-erythritol from CTP and 2-C-methyl-D-erythritol 4-phosphate (MEP). In Acaryochloris marina (strain MBIC 11017), this protein is 2-C-methyl-D-erythritol 4-phosphate cytidylyltransferase.